A 299-amino-acid chain; its full sequence is Coenzyme PQQ synthesis protein B (299 aa).

The protein belongs to the PqqB family.

The protein operates within cofactor biosynthesis; pyrroloquinoline quinone biosynthesis. Functionally, may be involved in the transport of PQQ or its precursor to the periplasm. In Methylorubrum extorquens (strain CM4 / NCIMB 13688) (Methylobacterium extorquens), this protein is Coenzyme PQQ synthesis protein B.